The primary structure comprises 63 residues: 2-hydroxymuconate tautomerase (63 aa).

The active-site Proton acceptor; via imino nitrogen is the P2.

It belongs to the 4-oxalocrotonate tautomerase family. In terms of assembly, homohexamer.

The enzyme catalyses (2Z,4E)-2-hydroxyhexa-2,4-dienedioate = (3E)-2-oxohex-3-enedioate. Its pathway is xenobiotic degradation; toluene degradation. The protein operates within xenobiotic degradation; xylene degradation. Its function is as follows. Catalyzes the ketonization of 2-hydroxymuconate stereoselectively to yield 2-oxo-3-hexenedioate. The sequence is that of 2-hydroxymuconate tautomerase (xylH) from Pseudomonas putida (Arthrobacter siderocapsulatus).